The chain runs to 122 residues: Cysteine proteinase inhibitor 5 (122 aa).

The first 26 residues, 1–26 (MTSKVVFLLLLSLVVVLLPLYASAAA), serve as a signal peptide directing secretion. The Cystatin domain occupies 29–117 (GGWSPISNVT…RNLTSFEPAN (89 aa)). An N-linked (GlcNAc...) asparagine glycan is attached at N36. The short motif at 72 to 76 (QVVSG) is the Secondary area of contact element. The N-linked (GlcNAc...) asparagine glycan is linked to N109.

This sequence belongs to the cystatin family. Phytocystatin subfamily.

The protein localises to the secreted. Functionally, specific inhibitor of cysteine proteinases. Probably involved in the regulation of endogenous processes and in defense against pests and pathogens. The protein is Cysteine proteinase inhibitor 5 (CYS5) of Arabidopsis thaliana (Mouse-ear cress).